The primary structure comprises 189 residues: NADH-quinone oxidoreductase subunit B (189 aa).

The [4Fe-4S] cluster site is built by Cys39, Cys40, Cys104, and Cys135.

It belongs to the complex I 20 kDa subunit family. In terms of assembly, NDH-1 is composed of 14 different subunits. Subunits NuoB, C, D, E, F, and G constitute the peripheral sector of the complex. [4Fe-4S] cluster serves as cofactor.

The protein resides in the cell inner membrane. It catalyses the reaction a quinone + NADH + 5 H(+)(in) = a quinol + NAD(+) + 4 H(+)(out). Its function is as follows. NDH-1 shuttles electrons from NADH, via FMN and iron-sulfur (Fe-S) centers, to quinones in the respiratory chain. The immediate electron acceptor for the enzyme in this species is believed to be a menaquinone. Couples the redox reaction to proton translocation (for every two electrons transferred, four hydrogen ions are translocated across the cytoplasmic membrane), and thus conserves the redox energy in a proton gradient. The chain is NADH-quinone oxidoreductase subunit B from Chlorobium limicola (strain DSM 245 / NBRC 103803 / 6330).